The primary structure comprises 77 residues: Anionic peptide 17.1 (77 aa).

An N-terminal signal peptide occupies residues 1–24 (MASKTVLVLLLVSVLVSTFCTAKA).

The protein belongs to the non-disulfide-bridged peptide (NDBP) superfamily. Long chain multifunctional peptide (group 2) family. As to expression, expressed by the venom gland.

Its subcellular location is the secreted. In Lychas mucronatus (Chinese swimming scorpion), this protein is Anionic peptide 17.1.